Consider the following 332-residue polypeptide: MVFPDLLPRRSTVQPVRLMGDERLRLFSGSANPELAQLVARYLGLAPGPLVRKSFADGELYVQIQESIRGCDVYLVQPTCSPVNDSLMELLILIDACRRASARQITAVLPYYGYARADRKTAGRESITAKLVANLITAAGVDRVLAMDLHSAQIQAYFDIPLDHVYGSPVLLQYIKEKQLGDMVIVSPDVGGVSRARAFAKKLDDAPLAIVDKRRQAPNEVEVMNVIGDVKGKTAILVDDMIDTAGTISEAAKVLLRQGAKEVYACATHAVFSSRAIDRLSDGTFTEVLVTNTIPVPPDRRFPQLRVLSVADLIGEAIWRIHEDSSVSSMFR.

57–59 (DGE) contacts ATP. Mg(2+) is bound by residues His-150 and Asp-189. Lys-213 is a catalytic residue. Residues Arg-215, Asp-239, and 243 to 247 (DTAGT) contribute to the D-ribose 5-phosphate site.

This sequence belongs to the ribose-phosphate pyrophosphokinase family. Class I subfamily. In terms of assembly, homohexamer. Mg(2+) serves as cofactor.

It is found in the cytoplasm. The catalysed reaction is D-ribose 5-phosphate + ATP = 5-phospho-alpha-D-ribose 1-diphosphate + AMP + H(+). It participates in metabolic intermediate biosynthesis; 5-phospho-alpha-D-ribose 1-diphosphate biosynthesis; 5-phospho-alpha-D-ribose 1-diphosphate from D-ribose 5-phosphate (route I): step 1/1. Its function is as follows. Involved in the biosynthesis of the central metabolite phospho-alpha-D-ribosyl-1-pyrophosphate (PRPP) via the transfer of pyrophosphoryl group from ATP to 1-hydroxyl of ribose-5-phosphate (Rib-5-P). This Gloeobacter violaceus (strain ATCC 29082 / PCC 7421) protein is Ribose-phosphate pyrophosphokinase.